Consider the following 508-residue polypeptide: DDB1- and CUL4-associated factor 10 (508 aa).

A disordered region spans residues 1–75 (MSSGHPSDNE…GSASGSGCRG (75 aa)). Basic and acidic residues predominate over residues 7–17 (SDNEEPRADLL). A compositionally biased stretch (acidic residues) spans 18 to 32 (REEEEEEEEEEDSDE). The span at 63–75 (GGTGSASGSGCRG) shows a compositional bias: gly residues. WD repeat units lie at residues 126-165 (QTHG…HIKT), 169-207 (AHED…SKVC), 211-250 (GHAS…EDGC), and 256-295 (FHTR…QSLE). Residues 307–343 (PPLSTEGSSAGSRSGGPRHTIDNKNHPHREGLSPRNS) form a disordered region. The segment covering 325–338 (HTIDNKNHPHREGL) has biased composition (basic and acidic residues). 3 WD repeats span residues 356 to 396 (DRGN…QEGA), 419 to 457 (VGRG…AELV), and 475 to 508 (SHSD…QPHF).

Belongs to the WD repeat DCAF10 family.

It functions in the pathway protein modification; protein ubiquitination. Functionally, may function as a substrate receptor for CUL4-DDB1 E3 ubiquitin-protein ligase complex. This chain is DDB1- and CUL4-associated factor 10 (dcaf10), found in Danio rerio (Zebrafish).